The sequence spans 305 residues: Dihydroorotate dehydrogenase B (NAD(+)), catalytic subunit (305 aa).

Residues Ser-20 and 44-45 (KG) each bind FMN. Residues Lys-44 and 68 to 72 (NAIGI) each bind substrate. 2 residues coordinate FMN: Asn-98 and Asn-126. Asn-126 provides a ligand contact to substrate. Cys-129 acts as the Nucleophile in catalysis. FMN contacts are provided by Lys-165 and Ile-191. 192-193 (NT) is a binding site for substrate. FMN-binding positions include Gly-217, 243-244 (GG), and 265-266 (GT).

It belongs to the dihydroorotate dehydrogenase family. Type 1 subfamily. As to quaternary structure, heterotetramer of 2 PyrK and 2 PyrD type B subunits. FMN serves as cofactor.

The protein resides in the cytoplasm. The catalysed reaction is (S)-dihydroorotate + NAD(+) = orotate + NADH + H(+). Its pathway is pyrimidine metabolism; UMP biosynthesis via de novo pathway; orotate from (S)-dihydroorotate (NAD(+) route): step 1/1. In terms of biological role, catalyzes the conversion of dihydroorotate to orotate with NAD(+) as electron acceptor. This is Dihydroorotate dehydrogenase B (NAD(+)), catalytic subunit (pyrD) from Maridesulfovibrio salexigens (strain ATCC 14822 / DSM 2638 / NCIMB 8403 / VKM B-1763) (Desulfovibrio salexigens).